The primary structure comprises 449 residues: CBL-interacting protein kinase 31 (449 aa).

The Protein kinase domain maps to 20–275 (YELGRTIGEG…ISQILEDPWF (256 aa)). ATP-binding positions include 26-34 (IGEGTFAKV) and K49. The active-site Proton acceptor is D143. The activation loop stretch occupies residues 161–190 (DFGLSALTEQVKADGLLHTTCGTPNYVAPE). Residues 313–337 (DQPTSMNAFELISLNQALNLDNLFE) enclose the NAF domain.

The protein belongs to the protein kinase superfamily. CAMK Ser/Thr protein kinase family. SNF1 subfamily. In terms of assembly, may interact with CBL3. Requires Mn(2+) as cofactor. Post-translationally, autophosphorylated. Highly expressed in leaf blade and leaf sheath, but not in other tissues.

It catalyses the reaction L-seryl-[protein] + ATP = O-phospho-L-seryl-[protein] + ADP + H(+). The enzyme catalyses L-threonyl-[protein] + ATP = O-phospho-L-threonyl-[protein] + ADP + H(+). Involved in cold stress tolerance. CIPK serine-threonine protein kinases interact with CBL proteins. Binding of a CBL protein to the regulatory NAF domain of CIPK protein lead to the activation of the kinase in a calcium-dependent manner. The chain is CBL-interacting protein kinase 31 (CIPK31) from Oryza sativa subsp. japonica (Rice).